Reading from the N-terminus, the 210-residue chain is NAD(P)H-hydrate epimerase (210 aa).

Residues 11–210 (AHNFDDYTIN…TVADIGIYEP (200 aa)) enclose the YjeF N-terminal domain. A (6S)-NADPHX-binding site is contributed by 60–64 (NNGGD). K(+) is bound by residues Asn61 and Asp123. (6S)-NADPHX is bound by residues 127–133 (GVGLSRD) and Asp156. Residue Thr159 coordinates K(+).

This sequence belongs to the NnrE/AIBP family. The cofactor is K(+).

It carries out the reaction (6R)-NADHX = (6S)-NADHX. The catalysed reaction is (6R)-NADPHX = (6S)-NADPHX. Catalyzes the epimerization of the S- and R-forms of NAD(P)HX, a damaged form of NAD(P)H that is a result of enzymatic or heat-dependent hydration. This is a prerequisite for the S-specific NAD(P)H-hydrate dehydratase to allow the repair of both epimers of NAD(P)HX. This is NAD(P)H-hydrate epimerase from Oenococcus oeni (strain ATCC BAA-331 / PSU-1).